The primary structure comprises 377 residues: Nitric oxide reductase FlRd-NAD(+) reductase (377 aa).

Belongs to the FAD-dependent oxidoreductase family. FAD serves as cofactor.

Its subcellular location is the cytoplasm. The enzyme catalyses 2 reduced [nitric oxide reductase rubredoxin domain] + NAD(+) + H(+) = 2 oxidized [nitric oxide reductase rubredoxin domain] + NADH. It participates in nitrogen metabolism; nitric oxide reduction. Its function is as follows. One of at least two accessory proteins for anaerobic nitric oxide (NO) reductase. Reduces the rubredoxin moiety of NO reductase. The sequence is that of Nitric oxide reductase FlRd-NAD(+) reductase from Salmonella typhi.